The chain runs to 89 residues: UPF0213 protein LSEI_1587 (89 aa).

Residues 4–79 form the GIY-YIG domain; that stretch reads KTYYFYVLLC…KHQTRHRKEV (76 aa).

It belongs to the UPF0213 family.

The protein is UPF0213 protein LSEI_1587 of Lacticaseibacillus paracasei (strain ATCC 334 / BCRC 17002 / CCUG 31169 / CIP 107868 / KCTC 3260 / NRRL B-441) (Lactobacillus paracasei).